We begin with the raw amino-acid sequence, 480 residues long: Phenolic acid decarboxylase (480 aa).

Mn(2+)-binding residues include asparagine 163, histidine 185, and glutamate 227. Residues 163-168 (NVGTYR) and 184-185 (MH) contribute to the prenylated FMN site. Glutamate 278 (proton donor) is an active-site residue. The tract at residues 443 to 466 (TTPVPPEPNPRETQLLDPPDGTEE) is disordered.

It belongs to the UbiD family. YclC subfamily. In terms of assembly, homohexamer. Prenylated FMN serves as cofactor. Mn(2+) is required as a cofactor.

The enzyme catalyses 4-hydroxybenzoate + H(+) = phenol + CO2. The catalysed reaction is 3,4-dihydroxybenzoate + H(+) = catechol + CO2. Its activity is regulated as follows. Inhibited by Zn(2+), (2,3,4)-trihydroxybenzoate and (3,4,5)-trihydroxybenzoate. Ammonium and rubidium ions decrease the activity of the carboxylation of 3,4-dihydroxybenzoate by about 20%. In terms of biological role, involved in the non-oxidative decarboxylation and detoxification of phenolic derivatives under anaerobic conditions. Oxygen-sensitive phenolic acid decarboxylase that catalyzes the reversible decarboxylation of 4-hydroxybenzoate and 3,4-dihydroxybenzoate. In Sedimentibacter hydroxybenzoicus (Clostridium hydroxybenzoicum), this protein is Phenolic acid decarboxylase.